Reading from the N-terminus, the 615-residue chain is DNA mismatch repair protein MutL (615 aa).

The segment at 362–397 is disordered; that stretch reads HFAEPAVREPVAPRYSPAPASGSRPAASWPNAQPGY. Positions 373–391 are enriched in low complexity; the sequence is APRYSPAPASGSRPAASWP.

Belongs to the DNA mismatch repair MutL/HexB family.

Functionally, this protein is involved in the repair of mismatches in DNA. It is required for dam-dependent methyl-directed DNA mismatch repair. May act as a 'molecular matchmaker', a protein that promotes the formation of a stable complex between two or more DNA-binding proteins in an ATP-dependent manner without itself being part of a final effector complex. This is DNA mismatch repair protein MutL from Escherichia coli O45:K1 (strain S88 / ExPEC).